A 486-amino-acid chain; its full sequence is Malonate-semialdehyde dehydrogenase (486 aa).

NAD(+) contacts are provided by phenylalanine 154, lysine 178, glutamate 181, arginine 182, and serine 231. The active-site Nucleophile is the cysteine 286. Residue glutamate 386 participates in NAD(+) binding.

Belongs to the aldehyde dehydrogenase family. IolA subfamily. Homotetramer.

It catalyses the reaction 3-oxopropanoate + NAD(+) + CoA + H2O = hydrogencarbonate + acetyl-CoA + NADH + H(+). The catalysed reaction is 2-methyl-3-oxopropanoate + NAD(+) + CoA + H2O = propanoyl-CoA + hydrogencarbonate + NADH + H(+). It functions in the pathway polyol metabolism; myo-inositol degradation into acetyl-CoA; acetyl-CoA from myo-inositol: step 7/7. Functionally, catalyzes the oxidation of malonate semialdehyde (MSA) and methylmalonate semialdehyde (MMSA) into acetyl-CoA and propanoyl-CoA, respectively. Is involved in a myo-inositol catabolic pathway. Bicarbonate, and not CO2, is the end-product of the enzymatic reaction. This Bacillus cytotoxicus (strain DSM 22905 / CIP 110041 / 391-98 / NVH 391-98) protein is Malonate-semialdehyde dehydrogenase.